The following is a 186-amino-acid chain: Ribosome-recycling factor (186 aa).

It belongs to the RRF family.

The protein resides in the cytoplasm. Its function is as follows. Responsible for the release of ribosomes from messenger RNA at the termination of protein biosynthesis. May increase the efficiency of translation by recycling ribosomes from one round of translation to another. In Ralstonia nicotianae (strain ATCC BAA-1114 / GMI1000) (Ralstonia solanacearum), this protein is Ribosome-recycling factor.